The following is a 260-amino-acid chain: Ditrans,polycis-undecaprenyl-diphosphate synthase ((2E,6E)-farnesyl-diphosphate specific) (260 aa).

Aspartate 20 is an active-site residue. Aspartate 20 lines the Mg(2+) pocket. Substrate contacts are provided by residues 21–24 (GNGR), tryptophan 25, arginine 33, histidine 37, and 65–67 (SSE). The Proton acceptor role is filled by asparagine 68. Tryptophan 69, arginine 71, and arginine 188 together coordinate substrate. A Mg(2+)-binding site is contributed by histidine 193. 194 to 196 (RIS) is a binding site for substrate. Glutamate 207 provides a ligand contact to Mg(2+).

This sequence belongs to the UPP synthase family. Homodimer. Mg(2+) is required as a cofactor.

It catalyses the reaction 8 isopentenyl diphosphate + (2E,6E)-farnesyl diphosphate = di-trans,octa-cis-undecaprenyl diphosphate + 8 diphosphate. Catalyzes the sequential condensation of isopentenyl diphosphate (IPP) with (2E,6E)-farnesyl diphosphate (E,E-FPP) to yield (2Z,6Z,10Z,14Z,18Z,22Z,26Z,30Z,34E,38E)-undecaprenyl diphosphate (di-trans,octa-cis-UPP). UPP is the precursor of glycosyl carrier lipid in the biosynthesis of bacterial cell wall polysaccharide components such as peptidoglycan and lipopolysaccharide. In Wigglesworthia glossinidia brevipalpis, this protein is Ditrans,polycis-undecaprenyl-diphosphate synthase ((2E,6E)-farnesyl-diphosphate specific).